The sequence spans 208 residues: MIGLVGRKVGMTRIFNEDGVSVPVTVIEIEANRVTQVKTLENDGYTAVQVTTGSKKANRVTKPEAGHFVKAGVEAGRGLWEFRTEGEEFTLGQEINVDIFADVKKVDVTGTSKGKGFQGGVKRWNFRTQDATHGNSLSHRVLGSIGQNQTPGRVFKGKKMAGHLGAERVTVQSLEVVRVDAERKLLLVKGSVPGAINGNVIVKPAVKA.

The residue at position 149 (Gln-149) is an N5-methylglutamine.

This sequence belongs to the universal ribosomal protein uL3 family. In terms of assembly, part of the 50S ribosomal subunit. Forms a cluster with proteins L14 and L19. Post-translationally, methylated by PrmB.

One of the primary rRNA binding proteins, it binds directly near the 3'-end of the 23S rRNA, where it nucleates assembly of the 50S subunit. The polypeptide is Large ribosomal subunit protein uL3 (Haemophilus influenzae (strain PittGG)).